A 67-amino-acid polypeptide reads, in one-letter code: Protein DsrB (67 aa).

The protein belongs to the DsrB family.

In Pectobacterium carotovorum subsp. carotovorum (strain PC1), this protein is Protein DsrB.